Reading from the N-terminus, the 565-residue chain is Oxygen-dependent choline dehydrogenase (565 aa).

FAD is bound at residue 7-36 (DYIICGAGSAGNVLATRLTEDPGVTVLLLE). His-474 functions as the Proton acceptor in the catalytic mechanism.

This sequence belongs to the GMC oxidoreductase family. Requires FAD as cofactor.

It carries out the reaction choline + A = betaine aldehyde + AH2. It catalyses the reaction betaine aldehyde + NAD(+) + H2O = glycine betaine + NADH + 2 H(+). It participates in amine and polyamine biosynthesis; betaine biosynthesis via choline pathway; betaine aldehyde from choline (cytochrome c reductase route): step 1/1. Functionally, involved in the biosynthesis of the osmoprotectant glycine betaine. Catalyzes the oxidation of choline to betaine aldehyde and betaine aldehyde to glycine betaine at the same rate. The chain is Oxygen-dependent choline dehydrogenase from Burkholderia pseudomallei (strain 1710b).